Consider the following 362-residue polypeptide: Peptide chain release factor 1 (362 aa).

Glutamine 237 carries the N5-methylglutamine modification.

It belongs to the prokaryotic/mitochondrial release factor family. In terms of processing, methylated by PrmC. Methylation increases the termination efficiency of RF1.

The protein resides in the cytoplasm. In terms of biological role, peptide chain release factor 1 directs the termination of translation in response to the peptide chain termination codons UAG and UAA. This chain is Peptide chain release factor 1, found in Vibrio parahaemolyticus serotype O3:K6 (strain RIMD 2210633).